We begin with the raw amino-acid sequence, 271 residues long: uncharacterized protein (271 aa).

This is an uncharacterized protein from Escherichia coli (strain K12).